Consider the following 984-residue polypeptide: Ephrin type-A receptor 3 (984 aa).

A signal peptide spans 1–20; it reads MDCHLSILILFGCCVLSCSR. Residues 21 to 541 are Extracellular-facing; the sequence is ELSPQPSNEV…SFSISGENSH (521 aa). The region spanning 29-207 is the Eph LBD domain; the sequence is EVNLLDSKTI…YFKKCPFTVK (179 aa). Residues asparagine 232, asparagine 337, asparagine 391, asparagine 404, and asparagine 493 are each glycosylated (N-linked (GlcNAc...) asparagine). 2 Fibronectin type-III domains span residues 325–435 and 436–532; these read PPSA…TNQA and APSP…SPDS. Residues 542 to 565 form a helical membrane-spanning segment; the sequence is VVMIAISAAVAIIVLTVVTYVLVG. At 566–984 the chain is on the cytoplasmic side; that stretch reads RFCGYHKSKH…TQSKNGPVPV (419 aa). Tyrosine 597 and tyrosine 603 each carry phosphotyrosine; by autocatalysis. The 262-residue stretch at 622–883 folds into the Protein kinase domain; it reads IAIDKVVGAG…QIVSILDKLI (262 aa). ATP contacts are provided by residues 629-634, lysine 654, and 701-707; these read GAGEFG and EYMENGS. Phosphotyrosine; by autocatalysis is present on tyrosine 702. The active-site Proton acceptor is aspartate 747. 751–752 contacts ATP; the sequence is RN. Tyrosine 780 is modified (phosphotyrosine; by autocatalysis). The SAM domain occupies 912-976; it reads ATFHTTGDWL…ISSIKALETQ (65 aa). Tyrosine 938 is modified (phosphotyrosine). Residues 982 to 984 carry the PDZ-binding motif; that stretch reads VPV.

Belongs to the protein kinase superfamily. Tyr protein kinase family. Ephrin receptor subfamily. As to quaternary structure, heterotetramer upon binding of the ligand. The heterotetramer is composed of an ephrin dimer and a receptor dimer. Oligomerization is probably required to induce biological responses. Forms a ternary EFNA5-EPHA3-ADAM10 complex mediating EFNA5 extracellular domain shedding by ADAM10 which regulates the EFNA5-EPHA3 complex internalization and function. Interacts (phosphorylated) with PTPN1; dephosphorylates EPHA3 and may regulate its trafficking and function. Interacts (phosphorylated) with CRK; mediates EFNA5-EPHA3 signaling through RHOA GTPase activation. Interacts with NCK1 (via SH2 domain); mediates EFNA5-EPHA3 signaling. In terms of processing, autophosphorylates upon activation by EFNA5. Phosphorylation on Tyr-603 mediates interaction with NCK1. Dephosphorylated by PTPN1. As to expression, most abundant in the heart, brain and lung.

The protein localises to the cell membrane. The catalysed reaction is L-tyrosyl-[protein] + ATP = O-phospho-L-tyrosyl-[protein] + ADP + H(+). Receptor tyrosine kinase which binds promiscuously membrane-bound ephrin family ligands residing on adjacent cells, leading to contact-dependent bidirectional signaling into neighboring cells. The signaling pathway downstream of the receptor is referred to as forward signaling while the signaling pathway downstream of the ephrin ligand is referred to as reverse signaling. Highly promiscuous for ephrin-A ligands it binds preferentially EFNA5. Upon activation by EFNA5 regulates cell-cell adhesion, cytoskeletal organization and cell migration. Plays a role in cardiac cells migration and differentiation and regulates the formation of the atrioventricular canal and septum during development probably through activation by EFNA1. Involved in the retinotectal mapping of neurons. May also control the segregation but not the guidance of motor and sensory axons during neuromuscular circuit development. This Rattus norvegicus (Rat) protein is Ephrin type-A receptor 3 (Epha3).